Reading from the N-terminus, the 774-residue chain is Pentatricopeptide repeat-containing protein At4g20770 (774 aa).

PPR repeat units lie at residues 5–39, 40–70, 71–101, 102–136, 137–171, 172–203, 204–238, 239–270, 283–313, 314–348, 349–379, 380–414, 415–449, 450–480, 482–516, 518–552, 553–583, 584–618, 619–654, and 655–685; these read GNKY…GMKS, DTYL…MSVR, DVYS…MPER, DVVS…GFLP, SRFT…GLDK, NIFV…LSQP, NEVS…GVQV, DSVC…LGKQ, DLHL…MPEV, NVVS…GFQP, NEVT…IPQP, SVSA…NLKP, DKTT…EISK, NSHI…CINE, DIAC…AVLC, NETS…GYVS, DSFV…VLRK, NTVI…GEKP, DGIT…GIEP, and ELDH…TPYK. Residues 690–765 are type E motif; it reads LWEILLSSCR…TPGQSWTTYG (76 aa).

The protein belongs to the PPR family. PCMP-E subfamily.

The polypeptide is Pentatricopeptide repeat-containing protein At4g20770 (PCMP-E35) (Arabidopsis thaliana (Mouse-ear cress)).